The following is a 245-amino-acid chain: Uridylate kinase (245 aa).

18-21 is an ATP binding site; sequence KLSG. G60 provides a ligand contact to UMP. G61 and R65 together coordinate ATP. Residues D80 and 141–148 each bind UMP; that span reads TGNPFFTT. Residues T168, Y174, and D177 each contribute to the ATP site.

Belongs to the UMP kinase family. Homohexamer.

The protein resides in the cytoplasm. It carries out the reaction UMP + ATP = UDP + ADP. The protein operates within pyrimidine metabolism; CTP biosynthesis via de novo pathway; UDP from UMP (UMPK route): step 1/1. Inhibited by UTP. Its function is as follows. Catalyzes the reversible phosphorylation of UMP to UDP. The sequence is that of Uridylate kinase from Pseudomonas aeruginosa (strain UCBPP-PA14).